A 536-amino-acid chain; its full sequence is Chaperonin GroEL 2 (536 aa).

ATP-binding positions include 29-32, K50, G416, and D497; that span reads TLGP.

The protein belongs to the chaperonin (HSP60) family. In terms of assembly, forms a cylinder of 14 subunits composed of two heptameric rings stacked back-to-back. Interacts with the co-chaperonin GroES.

The protein resides in the cytoplasm. It catalyses the reaction ATP + H2O + a folded polypeptide = ADP + phosphate + an unfolded polypeptide.. In terms of biological role, together with its co-chaperonin GroES, plays an essential role in assisting protein folding. The GroEL-GroES system forms a nano-cage that allows encapsulation of the non-native substrate proteins and provides a physical environment optimized to promote and accelerate protein folding. This Chlamydia caviae (strain ATCC VR-813 / DSM 19441 / 03DC25 / GPIC) (Chlamydophila caviae) protein is Chaperonin GroEL 2.